Consider the following 434-residue polypeptide: Alpha-enolase (434 aa).

An N-acetylserine modification is found at Ser-2. Position 5 is an N6-acetyllysine (Lys-5). At Ser-27 the chain carries Phosphoserine. Ser-40 contacts Mg(2+). A Phosphotyrosine modification is found at Tyr-44. N6-acetyllysine; alternate is present on Lys-60. An N6-succinyllysine; alternate modification is found at Lys-60. Residues Lys-64 and Lys-71 each carry the N6-acetyllysine modification. N6-acetyllysine; alternate is present on Lys-89. Lys-89 carries the post-translational modification N6-succinyllysine; alternate. 2 positions are modified to N6-acetyllysine: Lys-92 and Lys-126. Substrate is bound by residues His-158 and Glu-167. N6-acetyllysine occurs at positions 193 and 199. Lys-202 is subject to N6-acetyllysine; alternate. Lys-202 is covalently cross-linked (Glycyl lysine isopeptide (Lys-Gly) (interchain with G-Cter in SUMO2); alternate). Residue Glu-210 is the Proton donor of the active site. 2 positions are modified to N6-acetyllysine; alternate: Lys-228 and Lys-233. Lys-228 is subject to N6-succinyllysine; alternate. Lys-228 carries the N6-(2-hydroxyisobutyryl)lysine; alternate modification. N6-malonyllysine; alternate is present on Lys-233. Asp-245 contributes to the Mg(2+) binding site. Ser-254 carries the post-translational modification Phosphoserine. Position 256 is an N6-acetyllysine (Lys-256). A phosphoserine mark is found at Ser-263 and Ser-272. Lys-281 is modified (N6-acetyllysine; alternate). Lys-281 bears the N6-(2-hydroxyisobutyryl)lysine; alternate mark. The residue at position 285 (Lys-285) is an N6-acetyllysine. Phosphotyrosine is present on Tyr-287. Ser-291 is modified (phosphoserine). Mg(2+) is bound by residues Glu-293 and Asp-318. Glu-293 and Asp-318 together coordinate substrate. N6-acetyllysine occurs at positions 335 and 343. The active-site Proton acceptor is the Lys-343. Substrate-binding positions include 370–373 and Lys-394; that span reads SHRS. The segment at 405 to 434 is required for interaction with PLG; the sequence is AKYNQLLRIEEELGSKAKFAGRNFRNPLAK. Lys-406 carries the post-translational modification N6-acetyllysine. At Lys-420 the chain carries N6-acetyllysine; alternate. At Lys-420 the chain carries N6-succinyllysine; alternate. Position 420 is an N6-malonyllysine; alternate (Lys-420).

It belongs to the enolase family. As to quaternary structure, mammalian enolase is composed of 3 isozyme subunits, alpha, beta and gamma, which can form homodimers or heterodimers which are cell-type and development-specific. ENO1 interacts with PLG in the neuronal plasma membrane and promotes its activation. The C-terminal lysine is required for this binding. Interacts with ENO4 and PGAM2. Interacts with CMTM6. The cofactor is Mg(2+). Post-translationally, ISGylated. In terms of processing, lysine 2-hydroxyisobutyrylation (Khib) by p300/EP300 activates the phosphopyruvate hydratase activity.

It localises to the cytoplasm. It is found in the cell membrane. The enzyme catalyses (2R)-2-phosphoglycerate = phosphoenolpyruvate + H2O. The protein operates within carbohydrate degradation; glycolysis; pyruvate from D-glyceraldehyde 3-phosphate: step 4/5. In terms of biological role, glycolytic enzyme the catalyzes the conversion of 2-phosphoglycerate to phosphoenolpyruvate. In addition to glycolysis, involved in various processes such as growth control, hypoxia tolerance and allergic responses. May also function in the intravascular and pericellular fibrinolytic system due to its ability to serve as a receptor and activator of plasminogen on the cell surface of several cell-types such as leukocytes and neurons. Stimulates immunoglobulin production. In Pongo abelii (Sumatran orangutan), this protein is Alpha-enolase (ENO1).